Reading from the N-terminus, the 208-residue chain is Small ribosomal subunit protein uS4 (208 aa).

The S4 RNA-binding domain maps to 98-160; it reads SRLDNVAYNM…AKSYLRIKSS (63 aa).

This sequence belongs to the universal ribosomal protein uS4 family. As to quaternary structure, part of the 30S ribosomal subunit. Contacts protein S5. The interaction surface between S4 and S5 is involved in control of translational fidelity.

Functionally, one of the primary rRNA binding proteins, it binds directly to 16S rRNA where it nucleates assembly of the body of the 30S subunit. In terms of biological role, with S5 and S12 plays an important role in translational accuracy. The protein is Small ribosomal subunit protein uS4 of Nitrosomonas eutropha (strain DSM 101675 / C91 / Nm57).